The following is a 58-amino-acid chain: Probable mRNA interferase HicA 2 (58 aa).

This sequence belongs to the HicA mRNA interferase family. In terms of assembly, probably forms a complex with the cognate antitoxin HicB 2 which inhibits the mRNA interferase activity.

Toxic component of a type II toxin-antitoxin (TA) system. A probable translation-independent mRNA interferase. The polypeptide is Probable mRNA interferase HicA 2 (hicA2) (Photorhabdus laumondii subsp. laumondii (strain DSM 15139 / CIP 105565 / TT01) (Photorhabdus luminescens subsp. laumondii)).